Consider the following 237-residue polypeptide: Ribosomal RNA large subunit methyltransferase E (237 aa).

S-adenosyl-L-methionine is bound by residues glycine 76, tryptophan 78, aspartate 99, aspartate 115, and aspartate 139. Lysine 179 serves as the catalytic Proton acceptor.

The protein belongs to the class I-like SAM-binding methyltransferase superfamily. RNA methyltransferase RlmE family.

It localises to the cytoplasm. It catalyses the reaction uridine(2552) in 23S rRNA + S-adenosyl-L-methionine = 2'-O-methyluridine(2552) in 23S rRNA + S-adenosyl-L-homocysteine + H(+). Functionally, specifically methylates the uridine in position 2552 of 23S rRNA at the 2'-O position of the ribose in the fully assembled 50S ribosomal subunit. This is Ribosomal RNA large subunit methyltransferase E from Rhodopseudomonas palustris (strain TIE-1).